The primary structure comprises 85 residues: Kappa-theraphotoxin-Cg1d (85 aa).

The N-terminal stretch at 1-21 is a signal peptide; sequence MKVSVLITLAVLGVMFVWASA. Residues 22–51 constitute a propeptide that is removed on maturation; sequence AELEERGSDQRDSPAWLKSMERIFQSEERE. Disulfide bonds link Cys52–Cys66, Cys59–Cys71, and Cys65–Cys78.

This sequence belongs to the neurotoxin 10 (Hwtx-1) family. 28 (Jztx-11) subfamily. As to expression, expressed by the venom gland.

It localises to the secreted. In terms of biological role, probable ion channel inhibitor. The polypeptide is Kappa-theraphotoxin-Cg1d (Chilobrachys guangxiensis (Chinese earth tiger tarantula)).